A 552-amino-acid polypeptide reads, in one-letter code: MKEFFRPVISNALHSAGITTDKQIIIEQPADKKFGDFSTNIALLAAKECRRNPRELAQTIIEHLSFPPDTIAKIEVAGAGFINFYLTPLFIMQSVEQVLLDGDEYGKGESGKGEKAIVEYVSANPTGPLTIGRGRGGVLGDCIANLFATQGYAVTREYYFNDAGRQMQILGESVRFRYLERCGETIEFPATHYQGEYIGEIAEELFNDHGTALADSTDVQIFKKRAEEIIFASIRKTLERLGIRHDSFFNEHTLYTPDAGGVTGNQRVIDALREKEFIAEYDGATWFLTTKLGQEKDKVLIKSSGEPSYRLPDIAYHITKYERGFGMIVNVFGADHIDEYPDVLEALKILGYDTRHIKIAINQFVTTTVDGQTLKMSTRKGNADLLDDLIDDVGADATRLFFIMRSKDSHLNFDVELAKKQSKDNPVFYLQYAHARICSLLRMAQQEIGFDATSSPELHLLQRLTSPAELQLGSALLDYPDMIKTSLRLLEPQKMVEYLHSLAECFHRFYQECPILKAEPDIARARLFLSVATRQVLRNGFRILGVSAPESM.

The short motif at 123–133 is the 'HIGH' region element; that stretch reads ANPTGPLTIGR.

Belongs to the class-I aminoacyl-tRNA synthetase family. Monomer.

The protein resides in the cytoplasm. It catalyses the reaction tRNA(Arg) + L-arginine + ATP = L-arginyl-tRNA(Arg) + AMP + diphosphate. In Pelodictyon phaeoclathratiforme (strain DSM 5477 / BU-1), this protein is Arginine--tRNA ligase.